A 92-amino-acid polypeptide reads, in one-letter code: Small ribosomal subunit protein uS19c (92 aa).

This sequence belongs to the universal ribosomal protein uS19 family.

It is found in the plastid. It localises to the chloroplast. Functionally, protein S19 forms a complex with S13 that binds strongly to the 16S ribosomal RNA. The sequence is that of Small ribosomal subunit protein uS19c (rps19) from Guillardia theta (Cryptophyte).